The chain runs to 213 residues: StAR-related lipid transfer protein 5 (213 aa).

The 213-residue stretch at 1–213 folds into the START domain; the sequence is MDLATAAQVS…LEKAVKKFFG (213 aa).

Its function is as follows. May be involved in the intracellular transport of sterols or other lipids. May bind cholesterol or other sterols. The sequence is that of StAR-related lipid transfer protein 5 (STARD5) from Bos taurus (Bovine).